Here is a 549-residue protein sequence, read N- to C-terminus: Glucose-6-phosphate isomerase (549 aa).

The active-site Proton donor is Glu353. Residues His384 and Lys512 contribute to the active site.

This sequence belongs to the GPI family.

The protein resides in the cytoplasm. The enzyme catalyses alpha-D-glucose 6-phosphate = beta-D-fructose 6-phosphate. The protein operates within carbohydrate biosynthesis; gluconeogenesis. It functions in the pathway carbohydrate degradation; glycolysis; D-glyceraldehyde 3-phosphate and glycerone phosphate from D-glucose: step 2/4. Its function is as follows. Catalyzes the reversible isomerization of glucose-6-phosphate to fructose-6-phosphate. The chain is Glucose-6-phosphate isomerase from Alteromonas mediterranea (strain DSM 17117 / CIP 110805 / LMG 28347 / Deep ecotype).